Reading from the N-terminus, the 436-residue chain is Glutamyl-tRNA reductase (436 aa).

Residues 52–55 (TCHR), Ser105, 110–112 (EDQ), and Gln116 each bind substrate. The active-site Nucleophile is Cys53. 184-189 (GAGEMG) is an NADP(+) binding site.

The protein belongs to the glutamyl-tRNA reductase family. As to quaternary structure, homodimer.

It catalyses the reaction (S)-4-amino-5-oxopentanoate + tRNA(Glu) + NADP(+) = L-glutamyl-tRNA(Glu) + NADPH + H(+). It functions in the pathway porphyrin-containing compound metabolism; protoporphyrin-IX biosynthesis; 5-aminolevulinate from L-glutamyl-tRNA(Glu): step 1/2. Catalyzes the NADPH-dependent reduction of glutamyl-tRNA(Glu) to glutamate 1-semialdehyde (GSA). The protein is Glutamyl-tRNA reductase of Halobacterium salinarum (strain ATCC 29341 / DSM 671 / R1).